We begin with the raw amino-acid sequence, 443 residues long: Probable D-serine dehydratase (443 aa).

Residue Lys-116 is modified to N6-(pyridoxal phosphate)lysine.

This sequence belongs to the serine/threonine dehydratase family. DsdA subfamily. Requires pyridoxal 5'-phosphate as cofactor.

The catalysed reaction is D-serine = pyruvate + NH4(+). The chain is Probable D-serine dehydratase from Bacillus cereus (strain AH187).